Here is a 457-residue protein sequence, read N- to C-terminus: Siroheme synthase (457 aa).

The segment at 1 to 204 (MDHLPIFCQL…NDQKAITETT (204 aa)) is precorrin-2 dehydrogenase /sirohydrochlorin ferrochelatase. NAD(+) contacts are provided by residues 22 to 23 (DV) and 43 to 44 (LA). Position 128 is a phosphoserine (Ser-128). Residues 216-457 (GEVVLVGAGP…RDKLNWFSNH (242 aa)) are uroporphyrinogen-III C-methyltransferase. Position 225 (Pro-225) interacts with S-adenosyl-L-methionine. Asp-248 serves as the catalytic Proton acceptor. Catalysis depends on Lys-270, which acts as the Proton donor. Residues 301 to 303 (GGD), Ile-306, 331 to 332 (TA), Met-382, and Gly-411 each bind S-adenosyl-L-methionine.

This sequence in the N-terminal section; belongs to the precorrin-2 dehydrogenase / sirohydrochlorin ferrochelatase family. The protein in the C-terminal section; belongs to the precorrin methyltransferase family.

It catalyses the reaction uroporphyrinogen III + 2 S-adenosyl-L-methionine = precorrin-2 + 2 S-adenosyl-L-homocysteine + H(+). It carries out the reaction precorrin-2 + NAD(+) = sirohydrochlorin + NADH + 2 H(+). The catalysed reaction is siroheme + 2 H(+) = sirohydrochlorin + Fe(2+). It participates in cofactor biosynthesis; adenosylcobalamin biosynthesis; precorrin-2 from uroporphyrinogen III: step 1/1. It functions in the pathway cofactor biosynthesis; adenosylcobalamin biosynthesis; sirohydrochlorin from precorrin-2: step 1/1. Its pathway is porphyrin-containing compound metabolism; siroheme biosynthesis; precorrin-2 from uroporphyrinogen III: step 1/1. The protein operates within porphyrin-containing compound metabolism; siroheme biosynthesis; siroheme from sirohydrochlorin: step 1/1. It participates in porphyrin-containing compound metabolism; siroheme biosynthesis; sirohydrochlorin from precorrin-2: step 1/1. Functionally, multifunctional enzyme that catalyzes the SAM-dependent methylations of uroporphyrinogen III at position C-2 and C-7 to form precorrin-2 via precorrin-1. Then it catalyzes the NAD-dependent ring dehydrogenation of precorrin-2 to yield sirohydrochlorin. Finally, it catalyzes the ferrochelation of sirohydrochlorin to yield siroheme. This Escherichia coli O8 (strain IAI1) protein is Siroheme synthase.